A 1509-amino-acid polypeptide reads, in one-letter code: DNA-directed RNA polymerase subunit beta' (1509 aa).

The Zn(2+) site is built by cysteine 75, cysteine 77, cysteine 90, and cysteine 93. 3 residues coordinate Mg(2+): aspartate 474, aspartate 476, and aspartate 478. Residues cysteine 804, cysteine 878, cysteine 885, and cysteine 888 each contribute to the Zn(2+) site.

It belongs to the RNA polymerase beta' chain family. In terms of assembly, the RNAP catalytic core consists of 2 alpha, 1 beta, 1 beta' and 1 omega subunit. When a sigma factor is associated with the core the holoenzyme is formed, which can initiate transcription. It depends on Mg(2+) as a cofactor. Requires Zn(2+) as cofactor.

The enzyme catalyses RNA(n) + a ribonucleoside 5'-triphosphate = RNA(n+1) + diphosphate. In terms of biological role, DNA-dependent RNA polymerase catalyzes the transcription of DNA into RNA using the four ribonucleoside triphosphates as substrates. This chain is DNA-directed RNA polymerase subunit beta', found in Sulfurovum sp. (strain NBC37-1).